Reading from the N-terminus, the 115-residue chain is Type 3 secretion system chaperone YscG (115 aa).

The protein belongs to the YscG family. In terms of assembly, component of the heterodimeric YscE-YscG chaperone. The YscE-YscG chaperone forms a stable ternary complex with YscF/SctF.

The protein resides in the cytoplasm. Functionally, chaperone of the type III secretion system (T3SS), also called injectisome, which is used to inject bacterial effector proteins into eukaryotic host cells. Along with YscE, prevents premature polymerization of the YscF/SctF needle protein within the cytoplasm. Required for Yop secretion. This is Type 3 secretion system chaperone YscG from Yersinia enterocolitica.